Consider the following 393-residue polypeptide: Protein FAM47E (393 aa).

A coiled-coil region spans residues 326–354 (VSHKAQEENFKKELQEQEELLADLHGTVA).

It belongs to the FAM47 family. Interacts with PRMT5; the interaction is direct. Interacts with WDR77.

The protein localises to the nucleus. It is found in the chromosome. The protein resides in the cytoplasm. Its function is as follows. Promotes histone methylation by localizing the arginine methyltransferase PRMT5 to chromatin. The polypeptide is Protein FAM47E (FAM47E) (Homo sapiens (Human)).